The primary structure comprises 500 residues: NADH-quinone oxidoreductase subunit N (500 aa).

The next 14 helical transmembrane spans lie at Ser6–Val26, Ala40–Gly60, Met69–Ile89, Gly106–Ser125, Phe129–Arg151, Phe164–Ala184, Leu207–Phe227, Pro239–Ile259, Met276–Thr296, Leu302–Val322, Met337–Leu357, Tyr380–Phe400, Ser417–Leu437, and Ile464–Met484.

It belongs to the complex I subunit 2 family. In terms of assembly, NDH-1 is composed of 14 different subunits. Subunits NuoA, H, J, K, L, M, N constitute the membrane sector of the complex.

The protein localises to the cell inner membrane. It carries out the reaction a quinone + NADH + 5 H(+)(in) = a quinol + NAD(+) + 4 H(+)(out). Functionally, NDH-1 shuttles electrons from NADH, via FMN and iron-sulfur (Fe-S) centers, to quinones in the respiratory chain. The immediate electron acceptor for the enzyme in this species is believed to be ubiquinone. Couples the redox reaction to proton translocation (for every two electrons transferred, four hydrogen ions are translocated across the cytoplasmic membrane), and thus conserves the redox energy in a proton gradient. The protein is NADH-quinone oxidoreductase subunit N of Polaromonas naphthalenivorans (strain CJ2).